A 244-amino-acid polypeptide reads, in one-letter code: MAIKGPRKHLKRLAAPANWQLPRKVKAFTVRPSPGPHSMDKSLPLLLVVRDVLKYADNAREAKKIIQTGKILIDGLKRKEYKHPAGLMDVLSIPEMDENYLVLFDESGRISLKKTDKADAKLCKIVNKTVIKGGHIQLNLHDGRNQIVKVSDATKAEEDVYKTGDSVLVSIPEQSIVGHVAFGEGKLAYVTGGKHVGEFAKIVEVENRALYSDIVTLENKDGEKFKTVKPYVFIVGQDEPVISM.

The S4 RNA-binding domain maps to 43–106 (LPLLLVVRDV…DENYLVLFDE (64 aa)).

It belongs to the eukaryotic ribosomal protein eS4 family.

This is Small ribosomal subunit protein eS4 from Methanococcus maripaludis (strain C5 / ATCC BAA-1333).